Reading from the N-terminus, the 212-residue chain is Protein Thf1 (212 aa).

The stretch at 179 to 201 (ERMEQAVELMQETLAADRRKKEK) forms a coiled coil.

Belongs to the THF1 family.

May be involved in photosynthetic membrane biogenesis. The sequence is that of Protein Thf1 from Parasynechococcus marenigrum (strain WH8102).